The following is a 680-amino-acid chain: Methionine--tRNA ligase (680 aa).

The short motif at 15-25 (PYANGPVHIGH) is the 'HIGH' region element. Residues Cys147, Cys150, Cys160, and Cys163 each contribute to the Zn(2+) site. Positions 332-336 (KISTS) match the 'KMSKS' region motif. Position 335 (Thr335) interacts with ATP. The tRNA-binding domain maps to 578-680 (EFEKLDIRVG…REVKPGSEVK (103 aa)).

Belongs to the class-I aminoacyl-tRNA synthetase family. MetG type 1 subfamily. In terms of assembly, homodimer. Zn(2+) serves as cofactor.

The protein resides in the cytoplasm. It catalyses the reaction tRNA(Met) + L-methionine + ATP = L-methionyl-tRNA(Met) + AMP + diphosphate. Is required not only for elongation of protein synthesis but also for the initiation of all mRNA translation through initiator tRNA(fMet) aminoacylation. The protein is Methionine--tRNA ligase of Phocaeicola vulgatus (strain ATCC 8482 / DSM 1447 / JCM 5826 / CCUG 4940 / NBRC 14291 / NCTC 11154) (Bacteroides vulgatus).